The chain runs to 74 residues: O-conotoxin GeXXXIA (74 aa).

The signal sequence occupies residues 1-22; it reads MKLTCVLIITVLFLTACQLTTA. The propeptide occupies 23–33; that stretch reads VTYSRGEHKHR.

Belongs to the conotoxin O1 superfamily. In terms of assembly, homodimer; disulfide-linked. Post-translationally, may contain 2 intrachain disulfide bonds and probably one interchain disulfide bond forming the homodimer. In terms of processing, the disulfide pairing is not important for activity towards the different nAChR subtypes, since this peptide without disulfide bond or with different disulfide bonds shows the same activity. In terms of tissue distribution, expressed by the venom duct.

The protein localises to the secreted. Its function is as follows. The activity of this natural homodimer has not been tested due to low abundance. The synthetic linear peptide has been refolded, giving 4 different monomeric isomers (m1 to m4) with 2 disulfide bonds each. All isomers potently inhibit rat alpha-1-beta-1-delta-epsilon/CHRNA1-CHRNB1-CHRND-CHRNE and human alpha-9-alpha-10/CHRNA9-CHRNA10 nicotinic acetylcholine receptors (nAChR). In addition, they show a modest inhibition at human alpha-3-beta-2/CHRNA3-CHRNB2, alpha-3-beta-4/CHRNA3-CHRNB4, alpha-7/CHRNA7, and alpha-4-beta-4/CHRNA4-CHRNB4. The synthetic monomer peptide without disulfide bonds shows a potent activity on alpha-9-alpha-10/CHRNA9 and CHRNA10 (IC(50)=16.2 nM). This linear peptide does not act as a competitive antagonist, or as a channel pore blocker of nAChR. The chain is O-conotoxin GeXXXIA from Conus generalis (General cone).